Here is a 39-residue protein sequence, read N- to C-terminus: Potassium channel toxin alpha-KTx 2.17 (39 aa).

3 disulfides stabilise this stretch: C7-C29, C13-C34, and C17-C36. I39 is subject to Isoleucine amide.

Belongs to the short scorpion toxin superfamily. Potassium channel inhibitor family. Alpha-KTx 02 subfamily. As to expression, expressed by the venom gland.

It is found in the secreted. Its function is as follows. Blocks human voltage-gated potassium channels Kv1.1/KCNA1 (IC(50)=4.8 nM) and Kv1.2/KCNA2 (IC(50)=2.9 nM). The protein is Potassium channel toxin alpha-KTx 2.17 of Centruroides tecomanus (Scorpion).